The sequence spans 768 residues: MSNLSKGTGSRKDTKMRIRAFPMTMDEKYVNSIWDLLKNAIQEIQRKNNSGLSFEELYRNAYTMVLHKHGEKLYTGLREVVTEHLINKVREDVLNSLNNNFLQTLNQAWNDHQTAMVMIRDILMYMDRVYVQQNNVENVYNLGLIIFRDQVVRYGCIRDHLRQTLLDMIARERKGEVVDRGAIRNACQMLMILGLEGRSVYEEDFEAPFLEMSAEFFQMESQKFLAENSASVYIKKVEARINEEIERVMHCLDKSTEEPIVKVVERELISKHMKTIVEMENSGLVHMLKNGKTEDLACMYKLFSRVPNGLKTMCECMSCYLREQGKALVSEEGEGKNPVDYIQGLLDLKSRFDRFLQESFNNDRLFKQTIAGDFEYFLNLNSRSPEYLSLFIDDKLKKGVKGLTEQEVETILDKAMVLFRFMQEKDVFERYYKQHLARRLLTNKSVSDDSEKNMISKLKTECGCQFTSKLEGMFRDMSISNTTMDEFRQHLQATGVSLGGVDLTVRVLTTGYWPTQSATPKCNIPPAPRHAFEIFRRFYLAKHSGRQLTLQHHMGSADLNATFYGPVKKEDGSEVGVGGAQVTGSNTRKHILQVSTFQMTILMLFNNREKYTFEEIQQETDIPERELVRALQSLACGKPTQRVLTKEPKSKEIESGHIFTVNDQFTSKLHRVKIQTVAAKQGESDPERKETRQKVDDDRKHEIEAAIVRIMKSRKKMQHNVLVAEVTQQLKARFLPSPVVIKKRIEGLIEREYLARTPEDRKVYTYVA.

S2 bears the N-acetylserine mark. The interaction with KLHL18 stretch occupies residues 2-41; the sequence is SNLSKGTGSRKDTKMRIRAFPMTMDEKYVNSIWDLLKNAI. S585 is subject to Phosphoserine. A disordered region spans residues 677–698; it reads VAAKQGESDPERKETRQKVDDD. The span at 682–698 shows a compositional bias: basic and acidic residues; sequence GESDPERKETRQKVDDD. The region spanning 698–760 is the Cullin neddylation domain; it reads DRKHEIEAAI…REYLARTPED (63 aa). Residue K712 forms a Glycyl lysine isopeptide (Lys-Gly) (interchain with G-Cter in NEDD8) linkage.

This sequence belongs to the cullin family. Forms neddylation-dependent homodimers. Component of multiple BCR (BTB-CUL3-RBX1) E3 ubiquitin-protein ligase complexes formed of CUL3, RBX1 and a variable BTB domain-containing protein acting as both, adapter to cullin and substrate recognition subunit. The BCR complex may be active as a heterodimeric complex, in which NEDD8, covalently attached to one CUL3 molecule, binds to the C-terminus of a second CUL3 molecule. Interacts with RBX1, RNF7 and TIP120A/CAND1. Part of the BCR(SPOP) containing SPOP, and of BCR containing homodimeric SPOPL or the heterodimer formed by SPOP and SPOPL. Part of the probable BCR(KLHL9-KLHL13) complex with BTB domain proteins KLHL9 and KLHL13. Part of the BCR(KLHL41) complex containing KLHL41. Component of the BCR(KLHL12) E3 ubiquitin ligase complex, at least composed of CUL3 and KLHL12 and RBX1. Component of the BCR(KLHL3) E3 ubiquitin ligase complex, at least composed of CUL3 and KLHL3 and RBX1. Part of the BCR(ENC1) complex containing ENC1. Part of a complex consisting of BMI1/PCGF4, CUL3 and SPOP. Part of a complex consisting of BRMS1, CUL3 and SPOP. Component of the BCR(KLHL21) E3 ubiquitin ligase complex, at least composed of CUL3, KLHL21 and RBX1. Component of the BCR(KLHL22) E3 ubiquitin ligase complex, at least composed of CUL3, KLHL22 and RBX1. Component of the BCR(KLHL25) E3 ubiquitin ligase complex, at least composed of CUL3, KLHL25 and RBX1. Part of a complex consisting of MACROH2A1, CUL3 and SPOP. Component of the BCR(KLHL42) E3 ubiquitin ligase complex, at least composed of CUL3 and KLHL42. Component of the BCR(KBTBD8) E3 ubiquitin ligase complex, at least composed of CUL3, KBTBD8 and RBX1. Interacts with KLHL42 (via the BTB domain). Interacts with KATNA1; the interaction is enhanced by KLHL42. Interacts with KCTD5, KLHL9, KLHL11, KLHL13, GAN, ZBTB16, KLHL3, KLHL15, KLHL20, KLHL36, GMCL2, BTBD1. Part of a complex that contains CUL3, RBX1 and GAN. Interacts (via BTB domain) with KLHL17; the interaction regulates surface GRIK2 expression. Interacts with KCTD7. Part of the BCR(GAN) complex containing GAN. Part of the BCR(KEAP1) complex containing KEAP1. Interacts with KAT5 and ATF2. Interacts with KCTD17 in the BCR(KCTD17) E3 ubiquitin ligase complex, at least composed of CUL3, KCTD17 and RBX1. Interacts (when neddylated) with ARIH1; leading to activate the E3 ligase activity of ARIH1. Interacts with COPS9. Interacts with PPP2R5B; this interaction is indirect and mediated through KLHL15-binding and leads to PPP2R5B proteasomal degradation. Interacts with RBBP8/CtIP; this interaction is indirect and mediated through KLHL15-binding and leads to RBBP8 proteasomal degradation. Interacts with KLHL24 in the BCR(KLHL24) E3 ubiquitin ligase complex, composed of CUL3, RBX1 and KLHL24. Interacts with RHOBTB2. Interacts with CYCE. Interacts with KLHL10. Interacts with AURKA and KLHL18 (via BTB domain). Interacts (unneddylated form) with DCUN1D1, DCUN1D2, DCUN1D3, DCUN1D4 and DCUN1D5; these interactions promote the cullin neddylation. Component of a BCR3 (BTB-CUL3-RBX1) E3 ubiquitin ligase complex, also named Cul3-RING ubiquitin ligase complex CUL3(KBTBD6/7), composed of CUL3, RBX1, KBTBD6 and KBTBD7. Component of the BCR(KBTBD2) E3 ubiquitin ligase complex, at least composed of CUL3, KBTBD2 and RBX1. Interacts with KBTBD2 (via the BTB domain). Component of the BCR(KBTBD4) E3 ubiquitin ligase complex, at least composed of CUL3, KBTBD4 and RBX1. Post-translationally, neddylated. Attachment of NEDD8 is required for the E3 ubiquitin-protein ligase activity of the BCR complex. Deneddylated via its interaction with the COP9 signalosome (CSN) complex. Widely expressed, with highest expression in brain, spleen and testis. In the testis, it is mainly expressed in spermatids.

Its subcellular location is the nucleus. The protein localises to the golgi apparatus. The protein resides in the cell projection. It localises to the cilium. It is found in the flagellum. Its subcellular location is the cytoplasm. The protein localises to the cytoskeleton. The protein resides in the spindle. It localises to the microtubule organizing center. It is found in the centrosome. Its subcellular location is the spindle pole. The protein operates within protein modification; protein ubiquitination. Functionally, core component of multiple cullin-RING-based BCR (BTB-CUL3-RBX1) E3 ubiquitin-protein ligase complexes which mediate the ubiquitination and subsequent proteasomal degradation of target proteins. BCR complexes and ARIH1 collaborate in tandem to mediate ubiquitination of target proteins. As a scaffold protein may contribute to catalysis through positioning of the substrate and the ubiquitin-conjugating enzyme. The E3 ubiquitin-protein ligase activity of the complex is dependent on the neddylation of the cullin subunit and is inhibited by the association of the deneddylated cullin subunit with TIP120A/CAND1. The functional specificity of the BCR complex depends on the BTB domain-containing protein as the substrate recognition component. BCR(KLHL42) is involved in ubiquitination of KATNA1. BCR(SPOP) is involved in ubiquitination of BMI1/PCGF4, BRMS1, MACROH2A1 and DAXX, GLI2 and GLI3. Can also form a cullin-RING-based BCR (BTB-CUL3-RBX1) E3 ubiquitin-protein ligase complex containing homodimeric SPOPL or the heterodimer formed by SPOP and SPOPL; these complexes have lower ubiquitin ligase activity. BCR(KLHL9-KLHL13) controls the dynamic behavior of AURKB on mitotic chromosomes and thereby coordinates faithful mitotic progression and completion of cytokinesis. BCR(KLHL12) is involved in ER-Golgi transport by regulating the size of COPII coats, thereby playing a key role in collagen export, which is required for embryonic stem (ES) cells division: BCR(KLHL12) acts by mediating monoubiquitination of SEC31 (SEC31A or SEC31B). BCR(KLHL3) acts as a regulator of ion transport in the distal nephron; by mediating ubiquitination of WNK4. The BCR(KLHL20) E3 ubiquitin ligase complex is involved in interferon response and anterograde Golgi to endosome transport: it mediates both ubiquitination leading to degradation and 'Lys-33'-linked ubiquitination. The BCR(KLHL21) E3 ubiquitin ligase complex regulates localization of the chromosomal passenger complex (CPC) from chromosomes to the spindle midzone in anaphase and mediates the ubiquitination of AURKB. The BCR(KLHL22) ubiquitin ligase complex mediates monoubiquitination of PLK1, leading to PLK1 dissociation from phosphoreceptor proteins and subsequent removal from kinetochores, allowing silencing of the spindle assembly checkpoint (SAC) and chromosome segregation. The BCR(KLHL22) ubiquitin ligase complex is also responsible for the amino acid-stimulated 'Lys-48' polyubiquitination and proteasomal degradation of DEPDC5. Through the degradation of DEPDC5, releases the GATOR1 complex-mediated inhibition of the TORC1 pathway. The BCR(KLHL25) ubiquitin ligase complex is involved in translational homeostasis by mediating ubiquitination and subsequent degradation of hypophosphorylated EIF4EBP1 (4E-BP1). The BCR(KLHL25) ubiquitin ligase complex is also involved in lipid synthesis by mediating ubiquitination and degradation of ACLY. The BCR(KBTBD8) complex acts by mediating monoubiquitination of NOLC1 and TCOF1, leading to remodel the translational program of differentiating cells in favor of neural crest specification. Involved in ubiquitination of cyclin E and of cyclin D1 (in vitro) thus involved in regulation of G1/S transition. Involved in the ubiquitination of KEAP1, ENC1 and KLHL41. In concert with ATF2 and RBX1, promotes degradation of KAT5 thereby attenuating its ability to acetylate and activate ATM. The BCR(KCTD17) E3 ubiquitin ligase complex mediates ubiquitination and degradation of TCHP, a down-regulator of cilium assembly, thereby inducing ciliogenesis. The BCR(KLHL24) E3 ubiquitin ligase complex mediates ubiquitination of KRT14, controls KRT14 levels during keratinocytes differentiation, and is essential for skin integrity. The BCR(KLHL18) E3 ubiquitin ligase complex mediates the ubiquitination of AURKA leading to its activation at the centrosome which is required for initiating mitotic entry. The BCR(KEAP1) E3 ubiquitin ligase complex acts as a key sensor of oxidative and electrophilic stress by mediating ubiquitination and degradation of NFE2L2/NRF2, a transcription factor regulating expression of many cytoprotective genes. As part of the CUL3(KBTBD6/7) E3 ubiquitin ligase complex functions mediates 'Lys-48' ubiquitination and proteasomal degradation of TIAM1. By controlling the ubiquitination of that RAC1 guanine exchange factors (GEF), regulates RAC1 signal transduction and downstream biological processes including the organization of the cytoskeleton, cell migration and cell proliferation. The BCR(KBTBD4) E3 ubiquitin ligase complex targets CoREST corepressor complex components RCOR1, KDM1A/LSD1 and HDAC2 for proteasomal degradation with RCOR1 likely to be the primary target while degradation of KDM1A and HDAC2 is likely due to their association with RCOR1. It also targets RCOR3, MIER2 and MIER3 for proteasomal degradation as well as associated proteins ZNF217 and RREB1 with degradation being dependent on the presence of an ELM2 domain in the target proteins. The BCR(ARMC5) complex mediates premature transcription termination of transcripts that are unfavorably configured for transcriptional elongation by mediating ubiquitination of Pol II subunit POLR2A. Required for 'Lys-63'-linked ubiquitination of large ribosomal subunit protein MRPL12. The chain is Cullin-3 (Cul3) from Mus musculus (Mouse).